A 139-amino-acid chain; its full sequence is Large ribosomal subunit protein bL17 (139 aa).

The protein belongs to the bacterial ribosomal protein bL17 family. Part of the 50S ribosomal subunit. Contacts protein L32.

This chain is Large ribosomal subunit protein bL17, found in Azorhizobium caulinodans (strain ATCC 43989 / DSM 5975 / JCM 20966 / LMG 6465 / NBRC 14845 / NCIMB 13405 / ORS 571).